Reading from the N-terminus, the 274-residue chain is Glycerol uptake facilitator protein (274 aa).

The next 2 membrane-spanning stretches (helical) occupy residues 3-23 and 38-58; these read AFWGEVIGTMLLIIFGAGVCA and IVVVFGWGLGVAMAAYAVGGI. The NPA 1 motif lies at 64–66; sequence NPA. A run of 3 helical transmembrane segments spans residues 82-102, 131-151, and 164-184; these read VPVYIAAQMIGAIIGAVIIYL, FANVLSEVIGTFVLVLGILAI, and IVGFLIVAIGISLGGTTGYAI. Residues 185–187 carry the NPA 2 motif; sequence NPA. Residues 238–258 traverse the membrane as a helical segment; the sequence is ITSSFWIVSVILVVVLLGLYV.

The protein belongs to the MIP/aquaporin (TC 1.A.8) family.

It is found in the cell membrane. It carries out the reaction glycerol(in) = glycerol(out). Mediates glycerol diffusion across the cytoplasmic membrane via a pore-type mechanism. This Bacillus subtilis (strain 168) protein is Glycerol uptake facilitator protein (glpF).